The primary structure comprises 854 residues: Zinc finger protein 341 (854 aa).

The C2H2-type 1; atypical zinc-finger motif lies at 53–76 (FLCGKCKKQFNSLPAFMTHKREQC). The segment at 152 to 217 (DQPMPQGPPP…GRPNPGGNGV (66 aa)) is disordered. The segment covering 163-176 (QSSLNMHSVPSYLT) has biased composition (polar residues). The span at 177–210 (QPPPPPPPPPPLPPPPPPQPPPPPPQSLGPPGRP) shows a compositional bias: pro residues. 2 C2H2-type zinc fingers span residues 322-344 (LKCS…IRSH) and 350-372 (FQCI…MQTH). The segment at 399–434 (SRQEDEESTGLGQPLPGAPQPQALSTAGEEEGDKPE) is disordered. Positions 408–422 (GLGQPLPGAPQPQAL) are enriched in low complexity. C2H2-type zinc fingers lie at residues 445–467 (YLCQ…MTQH), 473–497 (YKCV…IKSH), 503–525 (YRCH…QYSH), 540–564 (YKCV…TATH), 566–588 (FPCP…LPTH), 594–616 (FKCQ…AHIH), 622–644 (YKCS…MLIH), 650–677 (YKCP…ILSH), and 683–705 (HKCA…QRAH). Positions 731–763 (CRLGPQKDKDLQTRRPPQRRAAPRSCGSGGRKV) are disordered.

It belongs to the krueppel C2H2-type zinc-finger protein family. In terms of assembly, binds DNA and to the STAT3 promoter.

The protein localises to the nucleus. In terms of biological role, transcriptional activator of STAT3 involved in the regulation of immune homeostasis. Also able to activate STAT1 transcription. The chain is Zinc finger protein 341 (ZNF341) from Homo sapiens (Human).